Consider the following 291-residue polypeptide: uncharacterized protein (291 aa).

The tract at residues 1–82 (MEAEKETEQE…SYSSSPFETH (82 aa)) is disordered. Low complexity-rich tracts occupy residues 28–43 (HSHS…ISAS) and 59–78 (STSS…SSSP).

This is an uncharacterized protein from Arabidopsis thaliana (Mouse-ear cress).